The primary structure comprises 690 residues: MPRQISLEKTRNIGIMAHIDAGKTTTTERILFYAGKIRKVAETHEGGAQMDWMEQEKERGITITSAATTCQWKEHKVNIIDTPGHVDFTVEVERSLRVLDGSVAVFCAKGGVQPQSETVWRQADKYRVPRMAFINKMDILGADFYQTIGMIKDRLGTNPVPLQLPIGKEDTFVGIVDLIKMNAVIYKDDLGQDMETTEIPEDMKELAREYREKLVEAAAETDEELMMKYLEGEELTEEEIVAGIRRGTVNVQFTPVICGSSYKNKGVQLLLDAVVAYMPSPLDIPAIKGITPDDEEEVERHSDDNEPFSALAFKIMADPYVGKLAFFRVYSGVLDAGSHVLNSTKGKRERIGRILQMHANTREEVSTVYAGDIAAAVGLKDTTTGDTLCDPDHVVILESMVFPEPVIHVAVEPKTKAGQEKMGIALQKLAEEDPTFKTYTDEETGQTIIAGMGELHLEIIVDRLLREFKVEANVGKPQVAYKETITQAVEVECKYARQSGGRGQYGHVKIRVIPQEPGKGYEFANQVVGGTIPKEYIPAVDAGIQGAMQAGVLGGYEVVDVRVELYDGSYHDVDSSEMAFKIAGSMAFKDGMRKGKAVLLEPYMKVEVTTPEDYMGEVIGDLNSRRGKIEGMEARSNGMQVINAYVPLSEMFGYATDLRSKTQGRATYSMHFDHYEAVPASIAEKITASK.

One can recognise a tr-type G domain in the interval 8–282 (EKTRNIGIMA…AVVAYMPSPL (275 aa)). Residues 17–24 (AHIDAGKT), 81–85 (DTPGH), and 135–138 (NKMD) contribute to the GTP site.

Belongs to the TRAFAC class translation factor GTPase superfamily. Classic translation factor GTPase family. EF-G/EF-2 subfamily.

It is found in the cytoplasm. Functionally, catalyzes the GTP-dependent ribosomal translocation step during translation elongation. During this step, the ribosome changes from the pre-translocational (PRE) to the post-translocational (POST) state as the newly formed A-site-bound peptidyl-tRNA and P-site-bound deacylated tRNA move to the P and E sites, respectively. Catalyzes the coordinated movement of the two tRNA molecules, the mRNA and conformational changes in the ribosome. In Alkaliphilus oremlandii (strain OhILAs) (Clostridium oremlandii (strain OhILAs)), this protein is Elongation factor G.